Consider the following 276-residue polypeptide: Undecaprenyl-diphosphatase 1 (276 aa).

A run of 6 helical transmembrane segments spans residues 43 to 63, 85 to 105, 109 to 129, 184 to 204, 214 to 234, and 254 to 274; these read RAMA…VWEF, ANLL…ADLI, LFNP…MLWA, ATEF…VYSG, ADFP…MIAV, and IVFG…WTAA.

The protein belongs to the UppP family.

It localises to the cell inner membrane. The catalysed reaction is di-trans,octa-cis-undecaprenyl diphosphate + H2O = di-trans,octa-cis-undecaprenyl phosphate + phosphate + H(+). Functionally, catalyzes the dephosphorylation of undecaprenyl diphosphate (UPP). Confers resistance to bacitracin. This is Undecaprenyl-diphosphatase 1 from Pseudomonas fluorescens (strain Pf0-1).